Consider the following 194-residue polypeptide: Translationally-controlled tumor protein homolog 2 (194 aa).

In terms of domain architecture, TCTP spans 1–194 (MKLYKDLIGN…IKYGLLQVDV (194 aa)).

Belongs to the TCTP family.

It is found in the cytoplasm. Functionally, involved in calcium binding and microtubule stabilization. The protein is Translationally-controlled tumor protein homolog 2 of Dictyostelium discoideum (Social amoeba).